The following is a 978-amino-acid chain: Mast/stem cell growth factor receptor Kit (978 aa).

A signal peptide spans 1-25; sequence MRGARGAWDFLFVLLLLLLVQTGSS. Topologically, residues 26-525 are extracellular; that stretch reads QPSVSPGELS…QIHAHTLFTP (500 aa). Ig-like C2-type domains are found at residues 27 to 112, 121 to 205, 212 to 309, 318 to 411, and 414 to 508; these read PSVS…VFVR, DLPL…LKVR, PVVS…LEVV, PMMN…VNVN, and PEIL…FNFA. Cys-58 and Cys-97 form a disulfide bridge. N-linked (GlcNAc...) asparagine glycosylation is found at Asn-94, Asn-130, and Asn-145. Disulfide bonds link Cys-136/Cys-186, Cys-151/Cys-183, and Cys-233/Cys-291. N-linked (GlcNAc...) asparagine glycosylation is found at Asn-284, Asn-294, Asn-301, Asn-321, Asn-353, Asn-368, Asn-401, Asn-464, and Asn-487. Cys-429 and Cys-492 are disulfide-bonded. A helical transmembrane segment spans residues 526 to 546; the sequence is LLIGFVIAAGLMCIFVMILTY. Over 547-978 the chain is Cytoplasmic; it reads KYLQKPMYEV…TQPLLVHEDV (432 aa). 2 positions are modified to phosphotyrosine: Tyr-548 and Tyr-554. Tyr-569 serves as a coordination point for Mg(2+). Phosphotyrosine; by autocatalysis occurs at positions 569 and 571. Positions 569–571 are important for interaction with phosphotyrosine-binding proteins; that stretch reads YVY. The 350-residue stretch at 590 to 939 folds into the Protein kinase domain; sequence LSFGKTLGAG…ISESTNHIYS (350 aa). Residues 597 to 604, Lys-624, and 672 to 678 contribute to the ATP site; these read GAGAFGKV and EYCCYGD. Phosphotyrosine; by autocatalysis occurs at positions 704 and 722. Residue Tyr-731 is modified to Phosphotyrosine. A phosphoserine; by PKC/PRKCA mark is found at Ser-743 and Ser-748. Asp-794 serves as the catalytic Proton acceptor. ATP is bound at residue Arg-798. Residues Asn-799 and Asp-812 each coordinate Mg(2+). Ser-823 is subject to Phosphoserine. At Tyr-825 the chain carries Phosphotyrosine; by autocatalysis. Residue Ser-893 is modified to Phosphoserine. The residue at position 902 (Tyr-902) is a Phosphotyrosine. At Tyr-938 the chain carries Phosphotyrosine; by autocatalysis. Phosphoserine is present on Ser-961.

Belongs to the protein kinase superfamily. Tyr protein kinase family. CSF-1/PDGF receptor subfamily. Monomer in the absence of bound KITLG/SCF. Homodimer in the presence of bound KITLG/SCF, forming a heterotetramer with two KITLG/SCF molecules. Interacts (via phosphorylated tyrosine residues) with the adapter proteins GRB2 and GRB7 (via SH2 domain), and SH2B2/APS. Interacts (via C-terminus) with MPDZ (via the tenth PDZ domain). Interacts (via phosphorylated tyrosine residues) with PIK3R1 and PIK3CD. Interacts (via phosphorylated tyrosine) with CRK (isoform Crk-II), FYN, SHC1 and MATK/CHK (via SH2 domain). Interacts with LYN and FES/FPS. Interacts (via phosphorylated tyrosine residues) with the protein phosphatases PTPN6/SHP-1 (via SH2 domain), PTPN11/SHP-2 (via SH2 domain) and PTPRU. Interacts with PLCG1. Interacts with DOK1 and TEC. Interacts with IL1RAP (independent of stimulation with KITLG/SCF). A mast cell-specific KITLG/SCF-induced interleukin-33 signaling complex contains IL1RL1, IL1RAP, KIT and MYD88. Post-translationally, ubiquitinated by SOCS6. KIT is rapidly ubiquitinated after autophosphorylation induced by KITLG/SCF binding, leading to internalization and degradation. In terms of processing, autophosphorylated on tyrosine residues. KITLG/SCF binding promotes autophosphorylation. Phosphorylated tyrosine residues are important for interaction with specific binding partners.

The protein localises to the cell membrane. It carries out the reaction L-tyrosyl-[protein] + ATP = O-phospho-L-tyrosyl-[protein] + ADP + H(+). Present in an inactive conformation in the absence of bound ligand. KITLG/SCF binding leads to dimerization and activation by autophosphorylation on tyrosine residues. Activity is down-regulated by PRKCA-mediated phosphorylation on serine residues. Tyrosine-protein kinase that acts as a cell-surface receptor for the cytokine KITLG/SCF and plays an essential role in the regulation of cell survival and proliferation, hematopoiesis, stem cell maintenance, gametogenesis, mast cell development, migration and function, and in melanogenesis. In response to KITLG/SCF binding, KIT can activate several signaling pathways. Phosphorylates PIK3R1, PLCG1, SH2B2/APS and CBL. Activates the AKT1 signaling pathway by phosphorylation of PIK3R1, the regulatory subunit of phosphatidylinositol 3-kinase. Activated KIT also transmits signals via GRB2 and activation of RAS, RAF1 and the MAP kinases MAPK1/ERK2 and/or MAPK3/ERK1. Promotes activation of STAT family members STAT1, STAT3, STAT5A and STAT5B. Activation of PLCG1 leads to the production of the cellular signaling molecules diacylglycerol and inositol 1,4,5-trisphosphate. KIT signaling is modulated by protein phosphatases, and by rapid internalization and degradation of the receptor. Activated KIT promotes phosphorylation of the protein phosphatases PTPN6/SHP-1 and PTPRU, and of the transcription factors STAT1, STAT3, STAT5A and STAT5B. Promotes phosphorylation of PIK3R1, CBL, CRK (isoform Crk-II), LYN, MAPK1/ERK2 and/or MAPK3/ERK1, PLCG1, SRC and SHC1. In Capra hircus (Goat), this protein is Mast/stem cell growth factor receptor Kit (KIT).